The chain runs to 224 residues: ATP-dependent dethiobiotin synthetase BioD (224 aa).

Thr18 lines the Mg(2+) pocket. Lys39 is a catalytic residue. Ser43 is a binding site for substrate. Asp56 and Glu117 together coordinate Mg(2+). ATP contacts are provided by residues Asp56, 117 to 120 (EGVG), and 177 to 178 (NE).

It belongs to the dethiobiotin synthetase family. Homodimer. The cofactor is Mg(2+).

It localises to the cytoplasm. It carries out the reaction (7R,8S)-7,8-diammoniononanoate + CO2 + ATP = (4R,5S)-dethiobiotin + ADP + phosphate + 3 H(+). The protein operates within cofactor biosynthesis; biotin biosynthesis; biotin from 7,8-diaminononanoate: step 1/2. Functionally, catalyzes a mechanistically unusual reaction, the ATP-dependent insertion of CO2 between the N7 and N8 nitrogen atoms of 7,8-diaminopelargonic acid (DAPA, also called 7,8-diammoniononanoate) to form a ureido ring. This chain is ATP-dependent dethiobiotin synthetase BioD, found in Xanthomonas euvesicatoria pv. vesicatoria (strain 85-10) (Xanthomonas campestris pv. vesicatoria).